The chain runs to 106 residues: COX assembly mitochondrial protein homolog (106 aa).

N-acetylalanine is present on Ala2. The region spanning 28-71 is the CHCH domain; the sequence is RERCSEQVQDFTKCCKDSGVLMVVKCRKENSALKDCLTSYYKDP. Short sequence motifs (cx9C motif) lie at residues 31 to 41 and 53 to 63; these read CSEQVQDFTKC and CRKENSALKDC. Intrachain disulfides connect Cys31–Cys63 and Cys41–Cys53.

This sequence belongs to the CMC family. In terms of assembly, component of the MITRAC (mitochondrial translation regulation assembly intermediate of cytochrome c oxidase complex) complex, the core components of this complex being COA3/MITRAC12 and COX14.

Its subcellular location is the mitochondrion. Component of the MITRAC (mitochondrial translation regulation assembly intermediate of cytochrome c oxidase complex) complex, that regulates cytochrome c oxidase assembly. This chain is COX assembly mitochondrial protein homolog (CMC1), found in Bos taurus (Bovine).